The sequence spans 294 residues: Shikimate dehydrogenase (NADP(+)) (294 aa).

Residues 25 to 27 (SAS) and Thr-72 contribute to the shikimate site. Catalysis depends on Lys-76, which acts as the Proton acceptor. 2 residues coordinate shikimate: Asn-97 and Asp-112. Residues 136 to 140 (GAGGA) and Thr-234 each bind NADP(+). Tyr-236 contributes to the shikimate binding site. Gly-257 provides a ligand contact to NADP(+).

Belongs to the shikimate dehydrogenase family. In terms of assembly, homodimer.

The catalysed reaction is shikimate + NADP(+) = 3-dehydroshikimate + NADPH + H(+). The protein operates within metabolic intermediate biosynthesis; chorismate biosynthesis; chorismate from D-erythrose 4-phosphate and phosphoenolpyruvate: step 4/7. Functionally, involved in the biosynthesis of the chorismate, which leads to the biosynthesis of aromatic amino acids. Catalyzes the reversible NADPH linked reduction of 3-dehydroshikimate (DHSA) to yield shikimate (SA). This is Shikimate dehydrogenase (NADP(+)) from Symbiobacterium thermophilum (strain DSM 24528 / JCM 14929 / IAM 14863 / T).